The primary structure comprises 238 residues: CD63 antigen (238 aa).

Over 1–11 (MAVEGGMKCVK) the chain is Cytoplasmic. The helical transmembrane segment at 12 to 32 (FLLYVLLLAFCACAVGLIAVG) threads the bilayer. Topologically, residues 33–51 (VGAQLVLSQTITHGATPGS) are extracellular. Residues 52–72 (LLPVVIIAVGAFLFLVAFVGC) form a helical membrane-spanning segment. Residues 73–81 (CGTCKENYC) lie on the Cytoplasmic side of the membrane. Residues 82–102 (LMITFAIFLSLIMLVEVAAAI) traverse the membrane as a helical segment. Over 103-203 (AGYVFRDKVM…KIGLWLRKNV (101 aa)) the chain is Extracellular. 4 N-linked (GlcNAc...) asparagine glycosylation sites follow: N125, N130, N150, and N172. Residues 204 to 224 (LVVAAAALGIAFVEVLGIVFA) traverse the membrane as a helical segment. Residues 225-238 (CCLVKSIRSGYEVM) lie on the Cytoplasmic side of the membrane. The short motif at 234–238 (GYEVM) is the Lysosomal targeting motif element.

The protein belongs to the tetraspanin (TM4SF) family. As to quaternary structure, interacts with TIMP1 and ITGB1 and recruits TIMP1 to ITGB1. Interacts with CD9. Identified in a complex with CD9 and ITGB3. Interacts with PMEL. Interacts with KDR/VEGFR2; identified in a complex with ITGB1 and KDR/VEGFR2 and is required to recruit KDR to ITGB1 complexes. Interacts with SYT7. Palmitoylated at a low, basal level in unstimulated platelets. The level of palmitoylation increases when platelets are activated by thrombin (in vitro).

The protein localises to the cell membrane. The protein resides in the lysosome membrane. It is found in the late endosome membrane. It localises to the endosome. Its subcellular location is the multivesicular body. The protein localises to the melanosome. The protein resides in the secreted. It is found in the extracellular exosome. It localises to the cell surface. Functionally, functions as a cell surface receptor for TIMP1 and plays a role in the activation of cellular signaling cascades. Plays a role in the activation of ITGB1 and integrin signaling, leading to the activation of AKT, FAK/PTK2 and MAP kinases. Promotes cell survival, reorganization of the actin cytoskeleton, cell adhesion, spreading and migration, via its role in the activation of AKT and FAK/PTK2. Plays a role in VEGFA signaling via its role in regulating the internalization of KDR/VEGFR2. Plays a role in intracellular vesicular transport processes, and is required for normal trafficking of the PMEL luminal domain that is essential for the development and maturation of melanocytes. Plays a role in the adhesion of leukocytes onto endothelial cells via its role in the regulation of SELP trafficking. May play a role in mast cell degranulation in response to Ms4a2/FceRI stimulation, but not in mast cell degranulation in response to other stimuli. This chain is CD63 antigen (CD63), found in Oryctolagus cuniculus (Rabbit).